The sequence spans 292 residues: Alpha-soluble NSF attachment protein (292 aa).

Serine 2 carries the post-translational modification N-acetylserine. Residue lysine 261 forms a Glycyl lysine isopeptide (Lys-Gly) (interchain with G-Cter in ubiquitin) linkage.

This sequence belongs to the SNAP family. Binds to vacuolar cis-SNARE complexes composed of the v-SNAREs NYV1, VTI1 and YKT6, and the t-SNAREs VAM3 and VAM7. Interacts with SEC18.

It is found in the membrane. Its function is as follows. SNARE complex protein that binds to cis-SNARE complexes on membranes and is required for vesicular transport between the endoplasmic reticulum and the Golgi apparatus and for homotypic vacuole fusion. During the priming step of membrane fusion, is released from cis-SNARE complexes by SEC18 to establish a pool of unpaired SNAREs, which are required for interactions in trans during docking and fusion steps. Can displace HOPS from SNARE complexes, which may be a prerequisite for trans-SNARE complex disassembly and subsequent rounds of priming, docking and fusion. This Saccharomyces cerevisiae (strain ATCC 204508 / S288c) (Baker's yeast) protein is Alpha-soluble NSF attachment protein (SEC17).